We begin with the raw amino-acid sequence, 170 residues long: Protein SprT (170 aa).

The SprT-like domain maps to 23–164 (QLARQHFSVE…CRQCGDKLKF (142 aa)). Histidine 78 serves as a coordination point for Zn(2+). Residue glutamate 79 is part of the active site. Histidine 82 serves as a coordination point for Zn(2+).

This sequence belongs to the SprT family. It depends on Zn(2+) as a cofactor.

Its subcellular location is the cytoplasm. This Serratia proteamaculans (strain 568) protein is Protein SprT.